The following is a 272-amino-acid chain: Orotidine 5'-phosphate decarboxylase (272 aa).

The active-site Proton donor is the K96.

It belongs to the OMP decarboxylase family. Type 2 subfamily.

It carries out the reaction orotidine 5'-phosphate + H(+) = UMP + CO2. The protein operates within pyrimidine metabolism; UMP biosynthesis via de novo pathway; UMP from orotate: step 2/2. The chain is Orotidine 5'-phosphate decarboxylase from Christiangramia forsetii (strain DSM 17595 / CGMCC 1.15422 / KT0803) (Gramella forsetii).